Here is a 797-residue protein sequence, read N- to C-terminus: Ubiquitin carboxyl-terminal hydrolase 14 (797 aa).

Residues L156–F266 form a UBP-type; degenerate zinc finger. Zn(2+) contacts are provided by C180, C183, C200, and H213. Residues T308–L796 form the USP domain. C317 serves as the catalytic Nucleophile. 2 consecutive UBA domains span residues V613–H654 and D670–N710. Catalysis depends on H758, which acts as the Proton acceptor.

Belongs to the peptidase C19 family. Constitutively and ubiquitously expressed (at protein level).

It catalyses the reaction Thiol-dependent hydrolysis of ester, thioester, amide, peptide and isopeptide bonds formed by the C-terminal Gly of ubiquitin (a 76-residue protein attached to proteins as an intracellular targeting signal).. Its function is as follows. Recognizes and hydrolyzes the peptide bond at the C-terminal Gly of ubiquitin. Involved in the processing of poly-ubiquitin precursors as well as that of ubiquitinated proteins. Involved in seed and embryo development. The chain is Ubiquitin carboxyl-terminal hydrolase 14 (UBP14) from Arabidopsis thaliana (Mouse-ear cress).